The primary structure comprises 251 residues: Insertion sequence IS5376 putative ATP-binding protein (251 aa).

105 to 112 (GPPGIGKT) contacts ATP.

The protein belongs to the IS21/IS1162 putative ATP-binding protein family.

The chain is Insertion sequence IS5376 putative ATP-binding protein from Geobacillus stearothermophilus (Bacillus stearothermophilus).